A 493-amino-acid polypeptide reads, in one-letter code: Involucrin (493 aa).

Disordered regions lie at residues 1-47 (MSQQ…CQKV), 60-123 (EEKH…GQLE), and 139-493 (KRDE…GQHE). Residues 76 to 89 (EQQQPQEQELQQQH) show a composition bias toward low complexity. Composition is skewed to basic and acidic residues over residues 90-116 (WEQDKEHQKAENPEQQLKQEKVQREKQ), 139-151 (KRDEQLGTKKEQL), 161-174 (QLKHLEQEEGHLEL), 184-193 (NLEHQEKPLE), and 201-213 (QLKHLEQQEKPLE). The span at 228 to 240 (QEGQSELPEQQRG) shows a compositional bias: polar residues. Composition is skewed to basic and acidic residues over residues 250 to 270 (GQLKHLEEQKGQLKHLEHEEG), 282 to 360 (KHLE…HEGQ), 372 to 386 (KHLEQEEKQLEHPEQ), 411 to 431 (KHLEQQEKQLEHPQQQEEQLK), and 439 to 450 (QLKDLEQQERQL). Residues 473 to 493 (GEVLLPVEQQQQKQEVQGQHE) show a composition bias toward low complexity.

Belongs to the involucrin family. As to quaternary structure, directly or indirectly cross-linked to cornifelin (CNFN). In terms of processing, substrate of transglutaminase. Specific glutamines or lysines are cross-linked to keratins, desmoplakin and to inter involucrin molecules. In terms of tissue distribution, keratinocytes of epidermis and other stratified squamous epithelia.

It is found in the cytoplasm. Part of the insoluble cornified cell envelope (CE) of stratified squamous epithelia. In Saguinus oedipus (Cotton-top tamarin), this protein is Involucrin (IVL).